Reading from the N-terminus, the 415-residue chain is Histidine--tRNA ligase (415 aa).

This sequence belongs to the class-II aminoacyl-tRNA synthetase family. As to quaternary structure, homodimer.

It is found in the cytoplasm. It carries out the reaction tRNA(His) + L-histidine + ATP = L-histidyl-tRNA(His) + AMP + diphosphate + H(+). The chain is Histidine--tRNA ligase from Clostridium botulinum (strain Okra / Type B1).